The following is a 306-amino-acid chain: SDS degradation transcriptional activation protein (306 aa).

The 59-residue stretch at 1-59 folds into the HTH lysR-type domain; that stretch reads MNDLRQLRHFVALAEHGHFARAAEAVNLSQPALSRSIQALENGLGCRLLDRGPRQVSLT. Positions 19-38 form a DNA-binding region, H-T-H motif; it reads FARAAEAVNLSQPALSRSIQ.

Belongs to the LysR transcriptional regulatory family.

Functionally, activates the transcription of the sdsA gene for sodium dodecyl sulfate (SDS) degradation. This chain is SDS degradation transcriptional activation protein (sdsB), found in Pseudomonas sp. (strain ATCC 19151).